A 386-amino-acid chain; its full sequence is Adiponectin receptor protein 2 (386 aa).

The disordered stretch occupies residues 1–71 (MNEPTENRLG…HEYSDEAPQE (71 aa)). The Cytoplasmic segment spans residues 1-147 (MNEPTENRLG…SIFRIHTETG (147 aa)). Residues 15-41 (PEPDIRLRKGHQLDGTRRGDNDSHQGD) are compositionally biased toward basic and acidic residues. The chain crosses the membrane as a helical span at residues 148–168 (NIWTHLLGCVFFLCLGIFYMF). The Extracellular segment spans residues 169–181 (RPNISFVAPLQEK). Residues 182–202 (VVFGLFFLGAILCLSFSWLFH) traverse the membrane as a helical segment. H202 serves as a coordination point for Zn(2+). Residues 203–213 (TVYCHSEGVSR) are Cytoplasmic-facing. The helical transmembrane segment at 214–234 (LFSKLDYSGIALLIMGSFVPW) threads the bilayer. The Extracellular portion of the chain corresponds to 235-245 (LYYSFYCNPQP). Residues 246-266 (CFIYLIVICVLGIAAIIVSQW) form a helical membrane-spanning segment. Topologically, residues 267-273 (DMFATPQ) are cytoplasmic. Residues 274 to 294 (YRGVRAGVFLGLGLSGIIPTL) traverse the membrane as a helical segment. At 295–309 (HYVISEGFLKAATIG) the chain is on the extracellular side. Residues 310–330 (QIGWLMLMASLYITGAALYAA) traverse the membrane as a helical segment. Residues 331-348 (RIPERFFPGKCDIWFHSH) are Cytoplasmic-facing. Zn(2+) is bound by residues H348 and H352. Residues 349–369 (QLFHIFVVAGAFVHFHGVSNL) traverse the membrane as a helical segment. The Extracellular segment spans residues 370–386 (QEFRFMIGGGCSEEDAL).

This sequence belongs to the ADIPOR family. May form homooligomers and heterooligomers with ADIPOR1. Interacts with APPL2 (via BAR domain); ADIPOQ dissociates this interaction. Ubiquitous. Highly expressed in skeletal muscle, liver and placenta. Weakly expressed in brain, heart, colon, spleen, kidney, thymus, small intestine, peripheral blood leukocytes and lung.

The protein localises to the cell membrane. Receptor for ADIPOQ, an essential hormone secreted by adipocytes that regulates glucose and lipid metabolism. Required for normal body fat and glucose homeostasis. ADIPOQ-binding activates a signaling cascade that leads to increased PPARA activity, and ultimately to increased fatty acid oxidation and glucose uptake. Has intermediate affinity for globular and full-length adiponectin. Required for normal revascularization after chronic ischemia caused by severing of blood vessels. The polypeptide is Adiponectin receptor protein 2 (Homo sapiens (Human)).